A 152-amino-acid chain; its full sequence is Transcriptional regulator MraZ (152 aa).

SpoVT-AbrB domains are found at residues 5–52 and 81–124; these read LNPI…THPQ and ATEV…GKSQ.

The protein belongs to the MraZ family. In terms of assembly, forms oligomers.

Its subcellular location is the cytoplasm. The protein resides in the nucleoid. In Coxiella burnetii (strain Dugway 5J108-111), this protein is Transcriptional regulator MraZ.